We begin with the raw amino-acid sequence, 317 residues long: MGEVQREKVAVIIGPTAVGKTKLSIDLAKALNGEIISGDSMQIYRTMDIGTAKVTKEEVDGIPHYMVDIKNPEESFSVAEFQERVRKHIREITERGKLPIIVGGTGLYIQSVLFDYQFTDDAGDAIYREQMEKLALERGVEYVHKKLQEVDPESAERIHANNVRRVIRALEIFHTSGEKMSDQLEKQENELLYDVSLIGLTMDREMLYDRINLRVDIMMDQGLLEEVEGLYNRGIRDCQSIQAIGYKEIYDYFEDRVSLEEAVSQLKTNSRRYAKRQLTWFRNKMDVTWFDVTDGEKTSEILRYXEGKLQLKSNNSK.

14–21 provides a ligand contact to ATP; sequence GPTAVGKT. 16–21 lines the substrate pocket; it reads TAVGKT. The segment at 39-42 is interaction with substrate tRNA; that stretch reads DSMQ.

This sequence belongs to the IPP transferase family. As to quaternary structure, monomer. The cofactor is Mg(2+).

It catalyses the reaction adenosine(37) in tRNA + dimethylallyl diphosphate = N(6)-dimethylallyladenosine(37) in tRNA + diphosphate. In terms of biological role, catalyzes the transfer of a dimethylallyl group onto the adenine at position 37 in tRNAs that read codons beginning with uridine, leading to the formation of N6-(dimethylallyl)adenosine (i(6)A). The protein is tRNA dimethylallyltransferase of Bacillus cereus (strain AH820).